We begin with the raw amino-acid sequence, 88 residues long: Conotoxin Ca8.3 (88 aa).

A signal peptide spans 1 to 21 (MMLKMGAMFVLLLLFILPSSQ). Residues 22–46 (QEGDVQARKTHLKSGFYGTLAMSTR) constitute a propeptide that is removed on maturation.

The protein belongs to the conotoxin S superfamily. Post-translationally, contains 5 disulfide bonds. As to expression, expressed by the venom duct.

The protein localises to the secreted. The sequence is that of Conotoxin Ca8.3 from Conus caracteristicus (Characteristic cone).